We begin with the raw amino-acid sequence, 498 residues long: NADP-dependent glyceraldehyde-3-phosphate dehydrogenase (498 aa).

Residues arginine 118 and 171–172 (NY) contribute to the substrate site. Lysine 194, threonine 197, and aspartate 232 together coordinate NADP(+). Residue 247–251 (GGDTG) participates in NAD(+) binding. Glutamate 266 (proton acceptor) is an active-site residue. Residue 299–301 (RCT) participates in substrate binding. Cysteine 300 functions as the Nucleophile in the catalytic mechanism. Position 393 (glutamate 393) interacts with NADP(+). Arginine 453 is a substrate binding site.

The protein belongs to the aldehyde dehydrogenase family.

It is found in the cytoplasm. It carries out the reaction D-glyceraldehyde 3-phosphate + NADP(+) + H2O = (2R)-3-phosphoglycerate + NADPH + 2 H(+). Important as a means of generating NADPH for biosynthetic reactions. This Zea mays (Maize) protein is NADP-dependent glyceraldehyde-3-phosphate dehydrogenase (GPN1).